The chain runs to 242 residues: MRELVEIIKGIGIEGAKEVEEKVDRQFYALQYLFRHQDPEMFIKLVIANSLVSYQLTGRGEDWWWEFARYFSGREVDSIWKAYGEFLPKSKNNRRLIEAKLNRIRKVEGFLSTLTLKDLEGYYKNMKMLWKALIKIMGSREDSKTIVFTVKMFGYASRIAFSRFIPYPMEIPIPEDLRIKSVTSKLTQEKPTKFWMKIGQESGVPPLHIDSLIWPLLGNADLTPLDIELRNKLMKLTELLGL.

8-oxoguanine is bound by residues Gln26, Ser53, and Trp64. Residues 120–184 (EGYYKNMKML…EDLRIKSVTS (65 aa)) form a helix-hairpin-helix region. Lys144 (schiff-base intermediate with DNA) is an active-site residue. 8-oxoguanine contacts are provided by Phe148 and Pro174. Asp176 is a catalytic residue. Asp210 and Trp214 together coordinate 8-oxoguanine.

This sequence belongs to the archaeal N-glycosylase/DNA lyase (AGOG) family.

The enzyme catalyses 2'-deoxyribonucleotide-(2'-deoxyribose 5'-phosphate)-2'-deoxyribonucleotide-DNA = a 3'-end 2'-deoxyribonucleotide-(2,3-dehydro-2,3-deoxyribose 5'-phosphate)-DNA + a 5'-end 5'-phospho-2'-deoxyribonucleoside-DNA + H(+). Functionally, DNA repair enzyme that is part of the base excision repair (BER) pathway; protects from oxidative damage by removing the major product of DNA oxidation, 8-oxoguanine (GO), from single- and double-stranded DNA substrates. This chain is N-glycosylase/DNA lyase, found in Pyrococcus furiosus (strain ATCC 43587 / DSM 3638 / JCM 8422 / Vc1).